Reading from the N-terminus, the 139-residue chain is Large ribosomal subunit protein uL16 (139 aa).

Belongs to the universal ribosomal protein uL16 family. As to quaternary structure, part of the 50S ribosomal subunit.

Binds 23S rRNA and is also seen to make contacts with the A and possibly P site tRNAs. The sequence is that of Large ribosomal subunit protein uL16 from Protochlamydia amoebophila (strain UWE25).